Consider the following 452-residue polypeptide: Protoheme IX farnesyltransferase, mitochondrial (452 aa).

A mitochondrion-targeting transit peptide spans 1 to 27 (MSLVIQPLLMRALNPNLSSILISGRGF). 7 helical membrane-spanning segments follow: residues 152 to 172 (VLVMLSAICSYALSPYPATVL), 235 to 255 (ILWLGVNPTVAFLGFSNIALY), 267 to 287 (IINTWVGALVGAIPPLMGWAA), 291 to 311 (LSHPGAWCLAGLLYAWQFPHF), 341 to 361 (VALRYSLLMFPLCFGLSYFNV), 364 to 386 (WYYQLDSAFVNAWMSLWAFKFYF), and 417 to 437 (TFWVSVLHLPAVLILAILHKK).

This sequence belongs to the UbiA prenyltransferase family.

It localises to the mitochondrion membrane. Functionally, converts protoheme IX and farnesyl diphosphate to heme O. This chain is Protoheme IX farnesyltransferase, mitochondrial (COX10), found in Kluyveromyces lactis (strain ATCC 8585 / CBS 2359 / DSM 70799 / NBRC 1267 / NRRL Y-1140 / WM37) (Yeast).